The primary structure comprises 81 residues: Conotoxin Im6.1 (81 aa).

The first 20 residues, 1-20 (MSKLGVVLFTLLLLVPLVTP), serve as a signal peptide directing secretion. Residues 21–47 (ERDGGKWTMLAKNKKAMKRNLMDFITR) constitute a propeptide that is removed on maturation. Intrachain disulfides connect cysteine 49–cysteine 61, cysteine 54–cysteine 67, and cysteine 60–cysteine 76.

It belongs to the conotoxin M superfamily. In terms of tissue distribution, expressed by the venom duct.

It localises to the secreted. In Conus imperialis (Imperial cone), this protein is Conotoxin Im6.1.